The primary structure comprises 1120 residues: MAEAPPVSGTFKFNTDAAEFIPQEKKNSGLNCGTQRRLDSNRIGRRNYSSPPPCHLSRQVPYDEISAVHQHSYHPSGSKPKSQQTSFQSSPCNKSPKSHGLQNQPWQKLRNEKHHIRVKKAQSLAEQTSDTAGLESSTRSESGTDLREHSPSESEKEVVGADPRGAKPKKATQFVYSYGRGPKVKGKLKCEWSNRTTPKPEDAGPESTKPVGVFHPDSSEASSRKGVLDGYGARRNEQRRYPQKRPPWEVEGARPRPGRNPPKQEGHRHTNAGHRNNMGPIPKDDLNERPAKSTCDSENLAVINKSSRRVDQEKCTVRRQDPQVVSPFSRGKQNHVLKNVETHTGSLIEQLTTEKYECMVCCELVRVTAPVWSCQSCYHVFHLNCIKKWARSPASQADGQSGWRCPACQNVSAHVPNTYTCFCGKVKNPEWSRNEIPHSCGEVCRKKQPGQDCPHSCNLLCHPGPCPPCPAFMTKTCECGRTRHTVRCGQAVSVHCSNPCENILNCGQHQCAELCHGGQCQPCQIILNQVCYCGSTSRDVLCGTDVGKSDGFGDFSCLKICGKDLKCGNHTCSQVCHPQPCQQCPRLPQLVRCCPCGQTPLSQLLELGSSSRKTCMDPVPSCGKVCGKPLPCGSLDFIHTCEKLCHEGDCGPCSRTSVISCRCSFRTKELPCTSLKSEDATFMCDKRCNKKRLCGRHKCNEICCVDKEHKCPLICGRKLRCGLHRCEEPCHRGNCQTCWQASFDELTCHCGASVIYPPVPCGTRPPECTQTCARVHECDHPVYHSCHSEEKCPPCTFLTQKWCMGKHEFRSNIPCHLVDISCGLPCSATLPCGMHKCQRLCHKGECLVDEPCKQPCTTPRADCGHPCMAPCHTSSPCPVTACKAKVELQCECGRRKEMVICSEASSTYQRIAAISMASKITDMQLGGSVEISKLITKKEVHQARLECDEECSALERKKRLAEAFHISEDSDPFNIRSSGSKFSDSLKEDARKDLKFVSDVEKEMETLVEAVNKGKNSKKSHSFPPMNRDHRRIIHDLAQVYGLESVSYDSEPKRNVVVTAIRGKSVCPPTTLTGVLEREMQARPPPPIPHHRHQSDKNPGSSNLQKITKEPIIDYFDVQD.

The tract at residues 9–26 (GTFKFNTDAAEFIPQEKK) is interaction with PABPC1 and PABC4. A disordered region spans residues 22 to 295 (PQEKKNSGLN…LNERPAKSTC (274 aa)). Phosphoserine is present on residues serine 50, serine 82, and serine 95. Over residues 73–106 (YHPSGSKPKSQQTSFQSSPCNKSPKSHGLQNQPW) the composition is skewed to polar residues. Residues 111 to 120 (NEKHHIRVKK) show a composition bias toward basic residues. A compositionally biased stretch (polar residues) spans 124 to 141 (LAEQTSDTAGLESSTRSE). 2 positions are modified to phosphoserine: serine 129 and serine 150. Basic and acidic residues-rich tracts occupy residues 142–159 (SGTDLREHSPSESEKEVV), 188–202 (LKCEWSNRTTPKPED), 222–254 (SSRKGVLDGYGARRNEQRRYPQKRPPWEVEGAR), and 282–291 (PKDDLNERPA). Residue serine 326 is modified to Phosphoserine. An RING-type; atypical zinc finger spans residues 358 to 409 (CMVCCELVRVTAPVWSCQSCYHVFHLNCIKKWARSPASQADGQSGWRCPACQ). 8 consecutive NF-X1-type zinc fingers follow at residues 453 to 471 (CPHSCNLLCHPGPCPPCPA), 506 to 525 (CGQHQCAELCHGGQCQPCQI), 567 to 586 (CGNHTCSQVCHPQPCQQCPR), 632 to 655 (CGSLDFIHTCEKLCHEGDCGPCSR), 694 to 713 (CGRHKCNEICCVDKEHKCPL), 721 to 740 (CGLHRCEEPCHRGNCQTCWQ), 832 to 854 (CGMHKCQRLCHKGECLVDEPCKQ), and 863 to 884 (CGHPCMAPCHTSSPCPVTACKA). The R3H domain occupies 994–1062 (LKFVSDVEKE…KRNVVVTAIR (69 aa)). The tract at residues 1081 to 1109 (QARPPPPIPHHRHQSDKNPGSSNLQKITK) is disordered. Positions 1097 to 1106 (KNPGSSNLQK) are enriched in polar residues.

The protein belongs to the NFX1 family. In terms of assembly, isoform 1 interacts with PABPC1 and PABPC4. As to quaternary structure, (Microbial infection) Isoform 1 and isoform 3 interact with human papillomavirus (HPV) type-16 E6 oncoprotein. Post-translationally, isoform 3 is polyubiquitinated in the presence of HPV16 E6 protein; which leads to proteasomal degradation. Isoform 1 is not polyubiquitinated.

Its subcellular location is the nucleus. Functionally, binds to the X-box motif of MHC class II genes and represses their expression. May play an important role in regulating the duration of an inflammatory response by limiting the period in which MHC class II molecules are induced by interferon-gamma. Isoform 3 binds to the X-box motif of TERT promoter and represses its expression. Together with PABPC1 or PABPC4, isoform 1 acts as a coactivator for TERT expression. Mediates E2-dependent ubiquitination. This chain is Transcriptional repressor NF-X1 (NFX1), found in Homo sapiens (Human).